Here is a 91-residue protein sequence, read N- to C-terminus: Protein SPATA45 homolog (91 aa).

The disordered stretch occupies residues 42–91; sequence RADRKHDPNGFNSSVFKGASNQHQESSLDFATAEPEFHRERRHFPEKSEY. Residues 51 to 70 are compositionally biased toward polar residues; it reads GFNSSVFKGASNQHQESSLD. Residues 76–91 show a composition bias toward basic and acidic residues; sequence PEFHRERRHFPEKSEY.

The protein belongs to the SPATA45 family.

The protein is Protein SPATA45 homolog of Nematostella vectensis (Starlet sea anemone).